The sequence spans 247 residues: tRNA pseudouridine synthase A (247 aa).

Residue aspartate 58 is the Nucleophile of the active site. Tyrosine 116 lines the substrate pocket.

This sequence belongs to the tRNA pseudouridine synthase TruA family. Homodimer.

It carries out the reaction uridine(38/39/40) in tRNA = pseudouridine(38/39/40) in tRNA. Functionally, formation of pseudouridine at positions 38, 39 and 40 in the anticodon stem and loop of transfer RNAs. This is tRNA pseudouridine synthase A from Hydrogenobaculum sp. (strain Y04AAS1).